We begin with the raw amino-acid sequence, 397 residues long: Diphosphomevalonate decarboxylase (397 aa).

(R)-5-diphosphomevalonate is bound by residues Y19–K22, R74, S153–R158, and T209. The interval G378–R397 is disordered.

The protein belongs to the diphosphomevalonate decarboxylase family. Homodimer.

It catalyses the reaction (R)-5-diphosphomevalonate + ATP = isopentenyl diphosphate + ADP + phosphate + CO2. It functions in the pathway isoprenoid biosynthesis; isopentenyl diphosphate biosynthesis via mevalonate pathway; isopentenyl diphosphate from (R)-mevalonate: step 3/3. Diphosphomevalonate decarboxylase; part of the second module of ergosterol biosynthesis pathway that includes the middle steps of the pathway. The second module is carried out in the vacuole and involves the formation of farnesyl diphosphate, which is also an important intermediate in the biosynthesis of ubiquinone, dolichol, heme and prenylated proteins. Activity by the mevalonate kinase ERG12 first converts mevalonate into 5-phosphomevalonate. 5-phosphomevalonate is then further converted to 5-diphosphomevalonate by the phosphomevalonate kinase ERG8. The diphosphomevalonate decarboxylase MVD1/ERG19 then produces isopentenyl diphosphate. The isopentenyl-diphosphate delta-isomerase IDI1 then catalyzes the 1,3-allylic rearrangement of the homoallylic substrate isopentenyl (IPP) to its highly electrophilic allylic isomer, dimethylallyl diphosphate (DMAPP). Finally the farnesyl diphosphate synthase ERG20 catalyzes the sequential condensation of isopentenyl pyrophosphate with dimethylallyl pyrophosphate, and then with the resultant geranylpyrophosphate to the ultimate product farnesyl pyrophosphate. This chain is Diphosphomevalonate decarboxylase, found in Eremothecium gossypii (strain ATCC 10895 / CBS 109.51 / FGSC 9923 / NRRL Y-1056) (Yeast).